Here is an 81-residue protein sequence, read N- to C-terminus: Thrombin-like enzyme collinein-3 (81 aa).

D4 is a catalytic residue. C51 and C68 form a disulfide bridge.

Monomer. As to expression, expressed by the vanom gland.

It localises to the secreted. Thrombin-like snake venom serine protease. In Crotalus durissus collilineatus (Brazilian rattlesnake), this protein is Thrombin-like enzyme collinein-3.